Here is a 152-residue protein sequence, read N- to C-terminus: Transcriptional regulator MraZ (152 aa).

SpoVT-AbrB domains lie at 5-52 (ATLV…PLPA) and 81-124 (ASEC…DEQT).

This sequence belongs to the MraZ family. As to quaternary structure, forms oligomers.

The protein resides in the cytoplasm. It localises to the nucleoid. Its function is as follows. Negatively regulates its own expression and that of the subsequent genes in the proximal part of the division and cell wall (dcw) gene cluster. Acts by binding directly to DNA. May also regulate the expression of genes outside the dcw cluster. The protein is Transcriptional regulator MraZ of Sodalis glossinidius (strain morsitans).